Here is a 267-residue protein sequence, read N- to C-terminus: NAD kinase 2 (267 aa).

Asp52 acts as the Proton acceptor in catalysis. Residues 52–53, 124–125, Arg151, Asp153, 164–169, and Ala188 each bind NAD(+); these read DA, NE, and TAYNKS.

Belongs to the NAD kinase family. It depends on a divalent metal cation as a cofactor.

Its subcellular location is the cytoplasm. It carries out the reaction NAD(+) + ATP = ADP + NADP(+) + H(+). Its function is as follows. Involved in the regulation of the intracellular balance of NAD and NADP, and is a key enzyme in the biosynthesis of NADP. Catalyzes specifically the phosphorylation on 2'-hydroxyl of the adenosine moiety of NAD to yield NADP. This Bacillus anthracis protein is NAD kinase 2.